Here is a 283-residue protein sequence, read N- to C-terminus: Orotidine 5'-phosphate decarboxylase (283 aa).

Lysine 97 functions as the Proton donor in the catalytic mechanism.

The protein belongs to the OMP decarboxylase family. Type 2 subfamily.

The catalysed reaction is orotidine 5'-phosphate + H(+) = UMP + CO2. It participates in pyrimidine metabolism; UMP biosynthesis via de novo pathway; UMP from orotate: step 2/2. The chain is Orotidine 5'-phosphate decarboxylase from Clostridium botulinum (strain Okra / Type B1).